Reading from the N-terminus, the 258-residue chain is 3-deoxy-manno-octulosonate cytidylyltransferase (258 aa).

This sequence belongs to the KdsB family.

The protein resides in the cytoplasm. The enzyme catalyses 3-deoxy-alpha-D-manno-oct-2-ulosonate + CTP = CMP-3-deoxy-beta-D-manno-octulosonate + diphosphate. It functions in the pathway nucleotide-sugar biosynthesis; CMP-3-deoxy-D-manno-octulosonate biosynthesis; CMP-3-deoxy-D-manno-octulosonate from 3-deoxy-D-manno-octulosonate and CTP: step 1/1. Its pathway is bacterial outer membrane biogenesis; lipopolysaccharide biosynthesis. Activates KDO (a required 8-carbon sugar) for incorporation into bacterial lipopolysaccharide in Gram-negative bacteria. This Pasteurella multocida (strain Pm70) protein is 3-deoxy-manno-octulosonate cytidylyltransferase.